The chain runs to 426 residues: MLTIKDIHALEVMDSRGNPTIQASVILSDNTKASAIVPSGASTGKREALELRDNDKTRFLGKGVLRACENVNSVIKHHLIGLEATSQAFVDERLRALDGTPNYANLGANAVLGVSMALARASAKALNLPLYRYLGGANALTLPVPMLNIINGGTHANNSIDFQEYMIMPLGFESFREALRASAEVYHTLKKLLDEKNQLTSVGDEGGFAPNFNNNVEPLEIISQAIEKAGYKLGEEIALALDVASSELVDEHFNYHLKGENKILDSHELVAYYKELVAKYPIVSIEDGLSEDDWEGWAFLSKELGRQIQLVGDDLFVTNASILQKGIEKNIANAILIKPNQIGTISETLETIRLAKHHAYQCVMSHRSGESEDSFIADFAVALNTGEIKTGSTARSERIAKYNRLLEIEHELKGGIYIGKELFKHG.

Gln163 provides a ligand contact to (2R)-2-phosphoglycerate. Residue Glu205 is the Proton donor of the active site. Mg(2+) is bound by residues Asp242, Glu286, and Asp313. (2R)-2-phosphoglycerate is bound by residues Lys338, Arg367, Ser368, and Lys389. Residue Lys338 is the Proton acceptor of the active site.

It belongs to the enolase family. Mg(2+) serves as cofactor.

The protein localises to the cytoplasm. It localises to the secreted. Its subcellular location is the cell surface. The enzyme catalyses (2R)-2-phosphoglycerate = phosphoenolpyruvate + H2O. It participates in carbohydrate degradation; glycolysis; pyruvate from D-glyceraldehyde 3-phosphate: step 4/5. In terms of biological role, catalyzes the reversible conversion of 2-phosphoglycerate (2-PG) into phosphoenolpyruvate (PEP). It is essential for the degradation of carbohydrates via glycolysis. The sequence is that of Enolase from Helicobacter pylori (strain G27).